Reading from the N-terminus, the 294-residue chain is Protease HtpX homolog 2 (294 aa).

2 helical membrane-spanning segments follow: residues 15–35 and 36–56; these read MLFT…FLSY and YGTS…AQYF. Residue H140 participates in Zn(2+) binding. Residue E141 is part of the active site. H144 contributes to the Zn(2+) binding site. The next 2 membrane-spanning stretches (helical) occupy residues 151–171 and 185–205; these read AVLT…RYSL and GGIM…FLLI. Residue E213 participates in Zn(2+) binding.

Belongs to the peptidase M48B family. Requires Zn(2+) as cofactor.

It is found in the cell membrane. The protein is Protease HtpX homolog 2 of Methanosarcina mazei (strain ATCC BAA-159 / DSM 3647 / Goe1 / Go1 / JCM 11833 / OCM 88) (Methanosarcina frisia).